Consider the following 316-residue polypeptide: Phospho-N-acetylmuramoyl-pentapeptide-transferase (316 aa).

A run of 10 helical transmembrane segments spans residues 5–25, 49–69, 76–96, 116–136, 141–161, 172–192, 195–212, 221–241, 244–264, and 296–316; these read IILA…LFIP, GTPT…TLIF, LAIL…DDFL, FLLA…EVIF, TTID…VGTV, GLAA…ALFL, ITYG…LGFL, IFMG…AAVL, LPLI…SVII, and VVYA…YSLS.

This sequence belongs to the glycosyltransferase 4 family. MraY subfamily. Mg(2+) is required as a cofactor.

It localises to the cell membrane. It carries out the reaction UDP-N-acetyl-alpha-D-muramoyl-L-alanyl-gamma-D-glutamyl-meso-2,6-diaminopimeloyl-D-alanyl-D-alanine + di-trans,octa-cis-undecaprenyl phosphate = di-trans,octa-cis-undecaprenyl diphospho-N-acetyl-alpha-D-muramoyl-L-alanyl-D-glutamyl-meso-2,6-diaminopimeloyl-D-alanyl-D-alanine + UMP. It participates in cell wall biogenesis; peptidoglycan biosynthesis. Its function is as follows. Catalyzes the initial step of the lipid cycle reactions in the biosynthesis of the cell wall peptidoglycan: transfers peptidoglycan precursor phospho-MurNAc-pentapeptide from UDP-MurNAc-pentapeptide onto the lipid carrier undecaprenyl phosphate, yielding undecaprenyl-pyrophosphoryl-MurNAc-pentapeptide, known as lipid I. The chain is Phospho-N-acetylmuramoyl-pentapeptide-transferase from Thermoanaerobacter pseudethanolicus (strain ATCC 33223 / 39E) (Clostridium thermohydrosulfuricum).